The chain runs to 404 residues: Ubiquitin-like modifier-activating enzyme 5 (404 aa).

ATP is bound by residues Gly83, Asp104, Lys127, Asn150, and Asn184. The Zn(2+) site is built by Cys226 and Cys229. Cys250 (glycyl thioester intermediate) is an active-site residue. Residues Cys303 and Cys308 each contribute to the Zn(2+) site. The segment at 372–393 (APEKSSETSEETVTAATADETS) is disordered. Residues 382-391 (ETVTAATADE) show a composition bias toward low complexity.

The protein belongs to the ubiquitin-activating E1 family. UBA5 subfamily.

Functionally, E1-like enzyme which activates UFM1. The protein is Ubiquitin-like modifier-activating enzyme 5 of Drosophila simulans (Fruit fly).